The primary structure comprises 156 residues: ATP synthase subunit b (156 aa).

The helical transmembrane segment at 11 to 31 (AIAFVLFVLFCMKYVWPPLMA) threads the bilayer.

The protein belongs to the ATPase B chain family. F-type ATPases have 2 components, F(1) - the catalytic core - and F(0) - the membrane proton channel. F(1) has five subunits: alpha(3), beta(3), gamma(1), delta(1), epsilon(1). F(0) has three main subunits: a(1), b(2) and c(10-14). The alpha and beta chains form an alternating ring which encloses part of the gamma chain. F(1) is attached to F(0) by a central stalk formed by the gamma and epsilon chains, while a peripheral stalk is formed by the delta and b chains.

The protein resides in the cell inner membrane. Its function is as follows. F(1)F(0) ATP synthase produces ATP from ADP in the presence of a proton or sodium gradient. F-type ATPases consist of two structural domains, F(1) containing the extramembraneous catalytic core and F(0) containing the membrane proton channel, linked together by a central stalk and a peripheral stalk. During catalysis, ATP synthesis in the catalytic domain of F(1) is coupled via a rotary mechanism of the central stalk subunits to proton translocation. In terms of biological role, component of the F(0) channel, it forms part of the peripheral stalk, linking F(1) to F(0). The sequence is that of ATP synthase subunit b from Citrobacter koseri (strain ATCC BAA-895 / CDC 4225-83 / SGSC4696).